We begin with the raw amino-acid sequence, 107 residues long: Thiosulfate sulfurtransferase GlpE (107 aa).

Positions 17–101 (AAGAARLVDI…GFEAWRREFP (85 aa)) constitute a Rhodanese domain. Residue cysteine 65 is the Cysteine persulfide intermediate of the active site.

This sequence belongs to the GlpE family.

The protein resides in the cytoplasm. It catalyses the reaction thiosulfate + hydrogen cyanide = thiocyanate + sulfite + 2 H(+). The enzyme catalyses thiosulfate + [thioredoxin]-dithiol = [thioredoxin]-disulfide + hydrogen sulfide + sulfite + 2 H(+). Its function is as follows. Transferase that catalyzes the transfer of sulfur from thiosulfate to thiophilic acceptors such as cyanide or dithiols. May function in a CysM-independent thiosulfate assimilation pathway by catalyzing the conversion of thiosulfate to sulfite, which can then be used for L-cysteine biosynthesis. This chain is Thiosulfate sulfurtransferase GlpE, found in Aeromonas hydrophila subsp. hydrophila (strain ATCC 7966 / DSM 30187 / BCRC 13018 / CCUG 14551 / JCM 1027 / KCTC 2358 / NCIMB 9240 / NCTC 8049).